Reading from the N-terminus, the 1030-residue chain is Teashirt homolog 2 (1030 aa).

Positions 1 to 120 (MPRRKQQAPK…THPKLPSEPH (120 aa)) are disordered. The stretch at 11-42 (RAAGYAQEEVLKEEEEIKEEEEEEEDSGSVAQ) forms a coiled coil. Positions 21–37 (LKEEEEIKEEEEEEEDS) are enriched in acidic residues. Polar residues-rich tracts occupy residues 39-49 (SVAQHQSSNDT) and 66-95 (SCQNSPGSHLSNQDAENESLLSDASDQVSD). The segment covering 103–120 (DVSDKKANTHPKLPSEPH) has biased composition (basic and acidic residues). Lys189 participates in a covalent cross-link: Glycyl lysine isopeptide (Lys-Gly) (interchain with G-Cter in SUMO2). C2H2-type zinc fingers lie at residues 216-240 (FRCRQCSAAYDTLVELTVHMNETGH) and 276-300 (LKCMFCGDSFDSLQDLSVHMIKTKH). The disordered stretch occupies residues 240–266 (HYQDDNRKKDKLRPTSYSKPRKRAFQD). Residues Lys307 and Lys316 each participate in a glycyl lysine isopeptide (Lys-Gly) (interchain with G-Cter in SUMO2) cross-link. The tract at residues 328–348 (VNRPCSPDSTTGSLADSFSSQ) is disordered. Positions 334-348 (PDSTTGSLADSFSSQ) are enriched in polar residues. Residues 381–405 (LKCMECGSSHDTLQQLTTHMMVTGH) form a C2H2-type 3; atypical zinc finger. A Glycyl lysine isopeptide (Lys-Gly) (interchain with G-Cter in SUMO2) cross-link involves residue Lys418. Residues 432 to 459 (SLSETPNSESLAPKPSSNSPSECTASTT) show a composition bias toward polar residues. Residues 432 to 488 (SLSETPNSESLAPKPSSNSPSECTASTTELKKESKKEKGEGIEDEQGVKSEDYEDSL) form a disordered region. Basic and acidic residues predominate over residues 460–482 (ELKKESKKEKGEGIEDEQGVKSE). Glycyl lysine isopeptide (Lys-Gly) (interchain with G-Cter in SUMO2) cross-links involve residues Lys462, Lys480, Lys497, and Lys601. Composition is skewed to basic and acidic residues over residues 608-623 (DEVVKQCGKESPHEEA) and 633-664 (SFSKIEPPSESRKAEPCPLKEEEKPQKEKPEP). 3 disordered regions span residues 608-687 (DEVV…LPSI), 703-726 (KATEPLRSPSCSSPNSSTSPVFHK), and 759-784 (QPIDLTKSKSKRAESSQAQSCTSPPQ). Lys652 is covalently cross-linked (Glycyl lysine isopeptide (Lys-Gly) (interchain with G-Cter in SUMO2)). Positions 710–722 (SPSCSSPNSSTSP) are enriched in low complexity. Over residues 773-783 (SSQAQSCTSPP) the composition is skewed to polar residues. Glycyl lysine isopeptide (Lys-Gly) (interchain with G-Cter in SUMO2) cross-links involve residues Lys796 and Lys816. Residues 837 to 907 (RKGRQSNWNP…NVKYQLRKTG (71 aa)) constitute a DNA-binding region (homeobox). A C2H2-type 4 zinc finger spans residues 922-944 (FYCSDCASQFRTPSTYISHLESH). Lys962 is covalently cross-linked (Glycyl lysine isopeptide (Lys-Gly) (interchain with G-Cter in SUMO2)). Disordered stretches follow at residues 965–987 (QEISRVSSAQRSPETIAGEEDTD) and 1009–1030 (LSKTHSKSPEHHSQFVADVDEE). Residues 968 to 977 (SRVSSAQRSP) show a composition bias toward polar residues. Phosphoserine is present on Ser976. The segment at 990–1013 (FKCKLCRRTFVSKHAVKLHLSKTH) adopts a C2H2-type 5 zinc-finger fold.

The protein belongs to the teashirt C2H2-type zinc-finger protein family. Interacts (via homeobox domain) with APBB1 (via PID domain 1). Post-translationally, sumoylated.

The protein resides in the nucleus. Probable transcriptional regulator involved in developmental processes. May act as a transcriptional repressor (Potential). The sequence is that of Teashirt homolog 2 (Tshz2) from Mus musculus (Mouse).